Reading from the N-terminus, the 736-residue chain is Oligopeptide transporter 6 (736 aa).

The next 15 helical transmembrane spans lie at 43 to 63, 66 to 86, 116 to 136, 148 to 168, 210 to 230, 258 to 278, 288 to 308, 357 to 377, 412 to 432, 443 to 463, 489 to 511, 527 to 547, 602 to 622, 645 to 665, and 678 to 698; these read MWVL…FFWY, MPLS…GHLM, VLIT…HILS, FLPA…WAGL, FFLI…YLFT, LGIG…GSPL, VAIG…WLNI, FFAV…VHVL, VPLW…MFIS, WWGV…IGVI, PVAN…TFIS, FMAQ…TAWW, WFFL…KMFP, ATAV…HFIF, and VLSG…FLAL.

Belongs to the oligopeptide OPT transporter (TC 2.A.67.1) family. As to expression, expressed in flowers and roots, and at a low level in leaves and stems. Detected in the cambial zone of the vascular bundles and in the region of lateral root initiation. Low expression in the vascular network of the petals and high in the stamen filaments and the gynoecium.

The protein resides in the membrane. In terms of biological role, involved in the translocation of tetra- and pentapeptides across the cellular membrane in an energy-dependent manner. Also involved in transport of glutathione derivatives and metal complexes, and may be involved in stress resistance. The chain is Oligopeptide transporter 6 (OPT6) from Arabidopsis thaliana (Mouse-ear cress).